The primary structure comprises 250 residues: Ribosome-inactivating protein luffin-B (250 aa).

Glu160 is an active-site residue.

It belongs to the ribosome-inactivating protein family. Type 1 RIP subfamily.

It carries out the reaction Endohydrolysis of the N-glycosidic bond at one specific adenosine on the 28S rRNA.. This Luffa aegyptiaca (Sponge gourd) protein is Ribosome-inactivating protein luffin-B.